The primary structure comprises 199 residues: Protein GrpE (199 aa).

Residues 1 to 17 (MSDSDNNTKSQQNNPTQ) show a composition bias toward polar residues. The segment at 1–36 (MSDSDNNTKSQQNNPTQTDEKSGEEIQSNQKPQRKF) is disordered.

This sequence belongs to the GrpE family. In terms of assembly, homodimer.

It localises to the cytoplasm. Its function is as follows. Participates actively in the response to hyperosmotic and heat shock by preventing the aggregation of stress-denatured proteins, in association with DnaK and GrpE. It is the nucleotide exchange factor for DnaK and may function as a thermosensor. Unfolded proteins bind initially to DnaJ; upon interaction with the DnaJ-bound protein, DnaK hydrolyzes its bound ATP, resulting in the formation of a stable complex. GrpE releases ADP from DnaK; ATP binding to DnaK triggers the release of the substrate protein, thus completing the reaction cycle. Several rounds of ATP-dependent interactions between DnaJ, DnaK and GrpE are required for fully efficient folding. The polypeptide is Protein GrpE (Ehrlichia canis (strain Jake)).